We begin with the raw amino-acid sequence, 521 residues long: Cell cycle checkpoint protein hpr-9 (521 aa).

Disordered stretches follow at residues 1 to 20, 318 to 375, and 492 to 521; these read MQAIHENYTDNPSSSITRER, QHEE…NRFV, and GTETTSKMRMSQQFDKRLGPLVSDTQYESR. Composition is skewed to polar residues over residues 355 to 370 and 493 to 504; these read ESLSQEETTRSQSLPS and TETTSKMRMSQQ.

Belongs to the rad9 family. As to quaternary structure, putative component of the toroidal 9-1-1 (RAD9-RAD1-HUS1) complex, composed of hpr-9, mrt-2 and hus-1.

Its function is as follows. May be a component of the 9-1-1 cell-cycle checkpoint response complex that plays a major role in DNA repair. The protein is Cell cycle checkpoint protein hpr-9 of Caenorhabditis elegans.